The primary structure comprises 874 residues: Alanine--tRNA ligase (874 aa).

Zn(2+) is bound by residues His563, His567, Cys665, and His669.

Belongs to the class-II aminoacyl-tRNA synthetase family. It depends on Zn(2+) as a cofactor.

The protein resides in the cytoplasm. It catalyses the reaction tRNA(Ala) + L-alanine + ATP = L-alanyl-tRNA(Ala) + AMP + diphosphate. In terms of biological role, catalyzes the attachment of alanine to tRNA(Ala) in a two-step reaction: alanine is first activated by ATP to form Ala-AMP and then transferred to the acceptor end of tRNA(Ala). Also edits incorrectly charged Ser-tRNA(Ala) and Gly-tRNA(Ala) via its editing domain. The chain is Alanine--tRNA ligase from Haemophilus influenzae (strain PittGG).